We begin with the raw amino-acid sequence, 461 residues long: Elongation factor 1-alpha (461 aa).

Residues 5–242 form the tr-type G domain; sequence KIHINIVVIG…DAILPPSRPT (238 aa). Positions 14–21 are G1; the sequence is GHVDSGKS. Residue 14–21 coordinates GTP; that stretch reads GHVDSGKS. Positions 70 to 74 are G2; the sequence is GITID. The tract at residues 91–94 is G3; sequence DAPG. GTP contacts are provided by residues 91–95 and 153–156; these read DAPGH and NKMD. The segment at 153-156 is G4; that stretch reads NKMD. The tract at residues 194–196 is G5; sequence SGW. E301 and E374 each carry 5-glutamyl glycerylphosphorylethanolamine.

The protein belongs to the TRAFAC class translation factor GTPase superfamily. Classic translation factor GTPase family. EF-Tu/EF-1A subfamily.

The protein resides in the cytoplasm. In terms of biological role, this protein promotes the GTP-dependent binding of aminoacyl-tRNA to the A-site of ribosomes during protein biosynthesis. This is Elongation factor 1-alpha from Apis mellifera (Honeybee).